Reading from the N-terminus, the 497-residue chain is MSQAVSSPLYAAIDLGSNSFHMLVVRHIDGSVQTMAKIKRKVRLAAGLDEHNALSLDAMQRGWDCLSLFAERLQDIPAENIRIVGTATLRTATNAGEFIAKANQILGHPIDVISGEEEAATIYKGVAHTSGGLGRRLVVDIGGASTELIIGEGFEAKALTSLKMGCVTWLERHFKDRQLTATNFNNAILAAKQMLDPILTQYTELGWNVCVGASGTVQALQEIMLAQGMDEVITLTKLKRLQKQAMLADHLEELDIEGLTLERALVFPSGLSILIAIFESLNIEAMTLAGGALREGLVYEMVQDLRQEDIRARTIRCVQTRYQIDSAYGDQVATLASKLLAQCGGEAWINEPQAEMLLRTAAKLHEIGLTIDFKKGGEHSAYLLQHLDLPGYTRAQKHYLGEIVRRYREQLTSLPEQYALSGTSGKRVLRLLRLAVLLSHRRSPALEPMVELSAQEDKLTLTLDGEWLAKNPLTRTELELEANRQTDIGWPLSIECH.

This sequence belongs to the GppA/Ppx family. GppA subfamily.

It carries out the reaction guanosine 3'-diphosphate 5'-triphosphate + H2O = guanosine 3',5'-bis(diphosphate) + phosphate + H(+). The protein operates within purine metabolism; ppGpp biosynthesis; ppGpp from GTP: step 2/2. Its function is as follows. Catalyzes the conversion of pppGpp to ppGpp. Guanosine pentaphosphate (pppGpp) is a cytoplasmic signaling molecule which together with ppGpp controls the 'stringent response', an adaptive process that allows bacteria to respond to amino acid starvation, resulting in the coordinated regulation of numerous cellular activities. This Vibrio cholerae serotype O1 (strain ATCC 39541 / Classical Ogawa 395 / O395) protein is Guanosine-5'-triphosphate,3'-diphosphate pyrophosphatase.